A 466-amino-acid polypeptide reads, in one-letter code: Soluble pyridine nucleotide transhydrogenase (466 aa).

E36 to C45 contributes to the FAD binding site.

It belongs to the class-I pyridine nucleotide-disulfide oxidoreductase family. FAD serves as cofactor.

The protein resides in the cytoplasm. It carries out the reaction NAD(+) + NADPH = NADH + NADP(+). Functionally, conversion of NADPH, generated by peripheral catabolic pathways, to NADH, which can enter the respiratory chain for energy generation. The chain is Soluble pyridine nucleotide transhydrogenase from Enterobacter sp. (strain 638).